The sequence spans 442 residues: D-serine dehydratase 1 (442 aa).

At Lys-118 the chain carries N6-(pyridoxal phosphate)lysine.

It belongs to the serine/threonine dehydratase family. DsdA subfamily. As to quaternary structure, monomer. Pyridoxal 5'-phosphate is required as a cofactor.

It catalyses the reaction D-serine = pyruvate + NH4(+). This chain is D-serine dehydratase 1, found in Escherichia coli (strain UTI89 / UPEC).